The chain runs to 360 residues: uncharacterized protein (360 aa).

6 helical membrane-spanning segments follow: residues 12 to 32 (ILPL…ITQI), 52 to 72 (VVLV…VIAV), 96 to 116 (IQLA…AYYI), 278 to 298 (IIWP…FLRY), 306 to 326 (FMPV…HFIL), and 336 to 356 (FIFA…YLLV).

The protein localises to the cell membrane. This is an uncharacterized protein from Rickettsia prowazekii (strain Madrid E).